Consider the following 228-residue polypeptide: ATP synthase subunit beta, mitochondrial (228 aa).

The N-terminal 31 residues, 1–31 (MFALRAAAKADKNLLPFLGQLSRSHAAKAAK), are a transit peptide targeting the mitochondrion. Residue 183–190 (GGAGVGKT) participates in ATP binding.

This sequence belongs to the ATPase alpha/beta chains family. As to quaternary structure, F-type ATPases have 2 components, CF(1) - the catalytic core - and CF(0) - the membrane proton channel. CF(1) has five subunits: alpha(3), beta(3), gamma(1), delta(1), epsilon(1). CF(0) has three main subunits: a, b and c.

The protein localises to the mitochondrion. The protein resides in the mitochondrion inner membrane. It catalyses the reaction ATP + H2O + 4 H(+)(in) = ADP + phosphate + 5 H(+)(out). Functionally, mitochondrial membrane ATP synthase (F(1)F(0) ATP synthase or Complex V) produces ATP from ADP in the presence of a proton gradient across the membrane which is generated by electron transport complexes of the respiratory chain. F-type ATPases consist of two structural domains, F(1) - containing the extramembraneous catalytic core, and F(0) - containing the membrane proton channel, linked together by a central stalk and a peripheral stalk. During catalysis, ATP synthesis in the catalytic domain of F(1) is coupled via a rotary mechanism of the central stalk subunits to proton translocation. Subunits alpha and beta form the catalytic core in F(1). Rotation of the central stalk against the surrounding alpha(3)beta(3) subunits leads to hydrolysis of ATP in three separate catalytic sites on the beta subunits. The protein is ATP synthase subunit beta, mitochondrial of Drosophila virilis (Fruit fly).